The sequence spans 82 residues: RNA-binding protein BH0128 (82 aa).

It belongs to the eukaryotic ribosomal protein eL8 family.

The chain is RNA-binding protein BH0128 from Halalkalibacterium halodurans (strain ATCC BAA-125 / DSM 18197 / FERM 7344 / JCM 9153 / C-125) (Bacillus halodurans).